Consider the following 747-residue polypeptide: Protein MTSS 2 (747 aa).

An IMD domain is found at 1-252 (METAEKECGA…EQVIKDLKGS (252 aa)). Residues 135 to 159 (EIKKKSSDTLKLQKKARKELLGKGD) adopt a coiled-coil conformation. Composition is skewed to low complexity over residues 256–284 (WSYQ…SSSS), 321–332 (SSVSSHDSGFVS), and 349–367 (TSQK…TCQS). 4 disordered regions span residues 256–302 (WSYQ…YSPS), 318–441 (ARLS…EEVS), 457–522 (LEHQ…RNSN), and 543–599 (PTAG…PTVP). Threonine 260 is modified (phosphothreonine). A Phosphoserine modification is found at serine 264. The span at 368-378 (VSECSSPTSDW) shows a compositional bias: polar residues. Over residues 397–406 (DRVELLRDTE) the composition is skewed to basic and acidic residues. Position 441 is a phosphoserine (serine 441). The span at 466 to 479 (SLQYSSGYSTQTTT) shows a compositional bias: low complexity. The segment covering 480 to 492 (PSCSEDTIPSQGS) has biased composition (polar residues). Phosphoserine occurs at positions 579, 601, 612, 624, 634, and 639. 2 disordered regions span residues 638–664 (LSLP…EDEQ) and 691–720 (GQFP…DPPA). At threonine 643 the chain carries Phosphothreonine. Composition is skewed to low complexity over residues 646–659 (GSPS…PGAG) and 696–707 (PTALSATPTEET). Positions 719–736 (PAEDMLVAIRRGVRLRRT) constitute a WH2 domain.

This sequence belongs to the MTSS family. As to quaternary structure, interacts (via IMD domain) with RAC1; this interaction may be important to potentiate PDGF-induced RAC1 activation.

Its subcellular location is the cytoplasm. It is found in the cell projection. It localises to the ruffle. Its function is as follows. Involved in plasma membrane dynamics. Potentiated PDGF-mediated formation of membrane ruffles and lamellipodia in fibroblasts, acting via RAC1 activation. May function in actin bundling. The chain is Protein MTSS 2 from Homo sapiens (Human).